The chain runs to 288 residues: Diaminopimelate epimerase (288 aa).

Positions 13, 46, and 66 each coordinate substrate. Catalysis depends on C75, which acts as the Proton donor. Substrate-binding positions include 76–77, N166, N199, and 217–218; these read GN and ER. The active-site Proton acceptor is C226. A substrate-binding site is contributed by 227-228; it reads GT.

The protein belongs to the diaminopimelate epimerase family. As to quaternary structure, homodimer.

The protein localises to the cytoplasm. It carries out the reaction (2S,6S)-2,6-diaminopimelate = meso-2,6-diaminopimelate. It participates in amino-acid biosynthesis; L-lysine biosynthesis via DAP pathway; DL-2,6-diaminopimelate from LL-2,6-diaminopimelate: step 1/1. Functionally, catalyzes the stereoinversion of LL-2,6-diaminopimelate (L,L-DAP) to meso-diaminopimelate (meso-DAP), a precursor of L-lysine and an essential component of the bacterial peptidoglycan. The sequence is that of Diaminopimelate epimerase from Cupriavidus metallidurans (strain ATCC 43123 / DSM 2839 / NBRC 102507 / CH34) (Ralstonia metallidurans).